The primary structure comprises 281 residues: MAQKIIRVGNIEIANDKPMVLFGGMNVLESRDMAMQVCEEYVRVTEKLGIPYVFKASFDKANRSSVTSYRGPGLEEGMRIFEDVKQAFGVPIITDVHEPAQAAVVAEVCDIIQLPAFLSRQTDLVVAMAKTGAVINIKKAQFLAPQEMKHILSKCEEAGNDQLILCERGSSFGYNNLVVDMLGFGIMKQFEYPVFFDVTHALQMPGGRADSAGGRRAQVTDLAKAGMSQSLAGLFLEAHPDPDNAKCDGPCALRLDKLEPFLAQLKALDELVKSFPTVETA.

This sequence belongs to the KdsA family.

The protein localises to the cytoplasm. The enzyme catalyses D-arabinose 5-phosphate + phosphoenolpyruvate + H2O = 3-deoxy-alpha-D-manno-2-octulosonate-8-phosphate + phosphate. It functions in the pathway carbohydrate biosynthesis; 3-deoxy-D-manno-octulosonate biosynthesis; 3-deoxy-D-manno-octulosonate from D-ribulose 5-phosphate: step 2/3. Its pathway is bacterial outer membrane biogenesis; lipopolysaccharide biosynthesis. This chain is 2-dehydro-3-deoxyphosphooctonate aldolase, found in Pseudomonas fluorescens (strain ATCC BAA-477 / NRRL B-23932 / Pf-5).